The chain runs to 385 residues: UPF0284 protein PMT9312_0438 (385 aa).

It belongs to the UPF0284 family.

The protein is UPF0284 protein PMT9312_0438 of Prochlorococcus marinus (strain MIT 9312).